The primary structure comprises 256 residues: Capsid protein (256 aa).

Positions 3–20 (KRPADIVISTPASKVRRK) match the Bipartite nuclear localization signal motif. A Nuclear localization signal motif is present at residues 40–54 (RRRTWVNRPMYRKPM). A zinc finger spans residues 68–85 (CEGPCKVQSYEQRHDVAH). A Nuclear export signal motif is present at residues 101–122 (ITHRTGKRFCIKSIYVLGKIWM). A Bipartite nuclear localization signal motif is present at residues 200-247 (NRFYKIYNHCTYNHQEAAKYENHTENALLLYMACTHASNPVYATLKIR).

It belongs to the geminiviridae capsid protein family. In terms of assembly, homomultimer. Binds to single-stranded and double-stranded viral DNA. Interacts (via nuclear localization signals) with host importin alpha-1a.

It is found in the virion. It localises to the host nucleus. Encapsidates the viral genome into characteristic twinned ('geminate') particles. Binds the genomic viral ssDNA and shuttles it into and out of the cell nucleus. Plays a role in protection of the genome from degradation, virus acquisition and transmission by insect vectors, infectivity, and systemic movement. The CP of monopartite geminiviruses is absolutely essential for virus movement. The protein is Capsid protein of Tomato leaf curl virus (strain Australia) (ToLCV).